The sequence spans 386 residues: Succinyl-diaminopimelate desuccinylase (386 aa).

Histidine 77 contacts Zn(2+). Residue aspartate 79 is part of the active site. A Zn(2+)-binding site is contributed by aspartate 110. The active-site Proton acceptor is glutamate 144. Residues glutamate 145, glutamate 173, and histidine 359 each coordinate Zn(2+).

This sequence belongs to the peptidase M20A family. DapE subfamily. Homodimer. Zn(2+) serves as cofactor. It depends on Co(2+) as a cofactor.

It carries out the reaction N-succinyl-(2S,6S)-2,6-diaminopimelate + H2O = (2S,6S)-2,6-diaminopimelate + succinate. Its pathway is amino-acid biosynthesis; L-lysine biosynthesis via DAP pathway; LL-2,6-diaminopimelate from (S)-tetrahydrodipicolinate (succinylase route): step 3/3. Its function is as follows. Catalyzes the hydrolysis of N-succinyl-L,L-diaminopimelic acid (SDAP), forming succinate and LL-2,6-diaminopimelate (DAP), an intermediate involved in the bacterial biosynthesis of lysine and meso-diaminopimelic acid, an essential component of bacterial cell walls. This is Succinyl-diaminopimelate desuccinylase from Methylibium petroleiphilum (strain ATCC BAA-1232 / LMG 22953 / PM1).